Here is a 957-residue protein sequence, read N- to C-terminus: Outer kinetochore KNL1 complex subunit knl-1 (957 aa).

The stretch at 87–90 (MDIT) is repeat 1. Residues 87-393 (MDITGLNSTP…NFDDVAMDIT (307 aa)) are 8 X 4 AA repeats of M-[D/E]-[I/L/M]-[S/T]. Positions 89–111 (ITGLNSTPVTPKTQTPFNGSMDM) are disordered. A compositionally biased stretch (polar residues) spans 91-106 (GLNSTPVTPKTQTPFN). 7 consecutive repeat copies span residues 109–112 (MDMS), 206–209 (MDIT), 251–254 (MDIT), 282–285 (MDLT), 326–329 (MEMT), 367–370 (MEMT), and 390–393 (MDIT). The tract at residues 476 to 504 (SLQQSSMRMSTTITEDVTASKNPESSTIS) is disordered. Residues 830 to 950 (KFAKESNVEI…RKKKEEMVER (121 aa)) adopt a coiled-coil conformation.

Component of the KNL1 complex composed of knl-1 and kbp-5. Part of the ten-subunit outer kinetochore KMN network that includes the KNL1, MIS12 and NDC80 complexes. Interacts with the protein phosphatase 1 (PP1) catalytic subunit gsp-1; the interaction is direct. Interacts with the protein phosphatase 1 (PP1) catalytic subunit gsp-2; the interaction is direct. Interacts with the MIS12 complex subunits kbp-1, kbp-2 and mis-12. Interacts with the NDC80 complex components ndc-80 and him-10. Interacts with knl-3. Interacts with kbp-3. Interacts with kbp-4. Interacts with kbp-5.

It localises to the cytoplasm. Its subcellular location is the cell cortex. The protein localises to the chromosome. The protein resides in the centromere. It is found in the kinetochore. In terms of biological role, acts as a component of the outer kinetochore KNL1 complex that serves as a docking point for spindle assembly checkpoint components and mediates microtubule-kinetochore interactions. Kinetochores, consisting of a centromere-associated inner segment and a microtubule-contacting outer segment, play a crucial role in chromosome segregation by mediating the physical connection between centromeric DNA and spindle microtubules. The outer kinetochore is made up of the ten-subunit KMN network, comprising the MIS12, NDC80 and KNL1 complexes, and auxiliary microtubule-associated components; together they connect the outer kinetochore with the inner kinetochore, bind microtubules, and mediate interactions with mitotic checkpoint proteins that delay anaphase until chromosomes are bioriented on the spindle. Binds the protein phosphatase 1 catalytic subunits gsp-1 and gsp-2, which has a role in delaying formation of load-bearing kinetochore-microtubule attachments. Required for the recruitment of spindle-assembly checkpoint components bub-1 and mdf-1/2 to unattached kinetochores. Binds microtubules which plays a role in silencing of the spindle assembly checkpoint, but not the formation of load-bearing microtubule-kinetochore attachments. Has a role in the correct localization of the spindly-like protein spdl-1 and the RZZ complex that is composed of rod-1, czw-1 and zwl-1 to kinetochores. This chain is Outer kinetochore KNL1 complex subunit knl-1, found in Caenorhabditis briggsae.